The primary structure comprises 267 residues: MGKLMVPKILVTNDDGVYSTGLKAAFDSVSDLGEVTISAPAVQQSGVGRSISIFEPLRITKTDVGGIPAYAVGGTPTDSVILGVFTILKAMPDLVLSGFNIGENISTDTITTSGTIGGALEAASYGVPAIAASMQVLDEGQKFDDPRDYQRERFEAGIKVVNRIARNVLKRGMPENVDLLNINIPFHAEEDTPIEITRLARKIFKTDVEERRDPRGRPYYWIAGDLIREEEEGTDVHAIMQKGHVSITPISLDSTARIDFSEIERYL.

Residues Asp-14, Asp-15, Ser-45, and Asn-100 each contribute to the a divalent metal cation site.

The protein belongs to the SurE nucleotidase family. It depends on a divalent metal cation as a cofactor.

The protein resides in the cytoplasm. The enzyme catalyses a ribonucleoside 5'-phosphate + H2O = a ribonucleoside + phosphate. Its function is as follows. Nucleotidase that shows phosphatase activity on nucleoside 5'-monophosphates. The polypeptide is 5'-nucleotidase SurE (Methanosarcina mazei (strain ATCC BAA-159 / DSM 3647 / Goe1 / Go1 / JCM 11833 / OCM 88) (Methanosarcina frisia)).